Consider the following 633-residue polypeptide: Phosphomethylpyrimidine synthase (633 aa).

Substrate contacts are provided by residues asparagine 245, methionine 274, tyrosine 303, histidine 339, 359–361 (SRG), 400–403 (DGLR), and glutamate 439. A Zn(2+)-binding site is contributed by histidine 443. Tyrosine 466 is a binding site for substrate. Histidine 507 contributes to the Zn(2+) binding site. [4Fe-4S] cluster is bound by residues cysteine 587, cysteine 590, and cysteine 595.

This sequence belongs to the ThiC family. In terms of assembly, homodimer. It depends on [4Fe-4S] cluster as a cofactor.

The catalysed reaction is 5-amino-1-(5-phospho-beta-D-ribosyl)imidazole + S-adenosyl-L-methionine = 4-amino-2-methyl-5-(phosphooxymethyl)pyrimidine + CO + 5'-deoxyadenosine + formate + L-methionine + 3 H(+). Its pathway is cofactor biosynthesis; thiamine diphosphate biosynthesis. Catalyzes the synthesis of the hydroxymethylpyrimidine phosphate (HMP-P) moiety of thiamine from aminoimidazole ribotide (AIR) in a radical S-adenosyl-L-methionine (SAM)-dependent reaction. The protein is Phosphomethylpyrimidine synthase of Neisseria gonorrhoeae (strain ATCC 700825 / FA 1090).